The sequence spans 67 residues: DNA-directed RNA polymerase subunit omega (67 aa).

This sequence belongs to the RNA polymerase subunit omega family. The RNAP catalytic core consists of 2 alpha, 1 beta, 1 beta' and 1 omega subunit. When a sigma factor is associated with the core the holoenzyme is formed, which can initiate transcription.

The catalysed reaction is RNA(n) + a ribonucleoside 5'-triphosphate = RNA(n+1) + diphosphate. Promotes RNA polymerase assembly. Latches the N- and C-terminal regions of the beta' subunit thereby facilitating its interaction with the beta and alpha subunits. This chain is DNA-directed RNA polymerase subunit omega, found in Variovorax paradoxus (strain S110).